The chain runs to 834 residues: DNA polymerase I, thermostable (834 aa).

In terms of domain architecture, 5'-3' exonuclease spans lysine 176 to glutamine 262. The tract at residues glutamate 412–glycine 834 is polymerase.

This sequence belongs to the DNA polymerase type-A family.

The enzyme catalyses DNA(n) + a 2'-deoxyribonucleoside 5'-triphosphate = DNA(n+1) + diphosphate. Has 5'-3' exonuclease activity and no 3'-5' exonuclease activity. The polypeptide is DNA polymerase I, thermostable (polA) (Thermus caldophilus).